We begin with the raw amino-acid sequence, 523 residues long: Glycerate kinase (523 aa).

Residue Ser60 is modified to Phosphoserine. Position 200 is an N6-acetyllysine (Lys200).

Belongs to the glycerate kinase type-2 family. In terms of tissue distribution, expressed in the hippocampus, callus, brain, cerebellum, renal cortex interstitial cells, epithelium of interlobular bile duct and skeletal muscle.

Its subcellular location is the cytoplasm. The enzyme catalyses (R)-glycerate + ATP = (2R)-3-phosphoglycerate + ADP + H(+). In Mus musculus (Mouse), this protein is Glycerate kinase (Glyctk).